The primary structure comprises 669 residues: JmjC domain-containing histone demethylation protein 1 (669 aa).

Residues 1-61 (MTAVAASSRV…RRKKPRTELV (61 aa)) are disordered. 2 stretches are compositionally biased toward polar residues: residues 16–27 (ASSSAHPRTLRS) and 36–49 (HDSS…QSKQ). A PHD-type zinc finger spans residues 65 to 126 (ELDCAACPAV…KWYCQPCITR (62 aa)). Disordered regions lie at residues 131-150 (FESG…RPPR) and 220-256 (PPDR…QATH). Residues 246-255 (KPARAKKQAT) are compositionally biased toward basic residues. Residues 332–494 (VTGTPMQAYV…TQWKLVEIEE (163 aa)) enclose the JmjC domain. Fe cation is bound by residues H390 and D392. K407 is a substrate binding site. H462 provides a ligand contact to Fe cation.

This sequence belongs to the JHDM1 histone demethylase family. Fe(2+) serves as cofactor.

The protein resides in the nucleus. The enzyme catalyses N(6),N(6)-dimethyl-L-lysyl(36)-[histone H3] + 2 2-oxoglutarate + 2 O2 = L-lysyl(36)-[histone H3] + 2 formaldehyde + 2 succinate + 2 CO2. In terms of biological role, histone demethylase that specifically demethylates 'Lys-36' of histone H3, thereby playing a central role in histone code. This is JmjC domain-containing histone demethylation protein 1 (JHD1) from Mycosarcoma maydis (Corn smut fungus).